Here is a 475-residue protein sequence, read N- to C-terminus: Luvungin A synthase CYP716AC1 (475 aa).

Residues F3–I23 traverse the membrane as a helical segment. C423 serves as a coordination point for heme.

This sequence belongs to the cytochrome P450 family. It depends on heme as a cofactor. As to expression, expressed in flowers, maturing fruits and in juice vesicles.

It is found in the membrane. It carries out the reaction (21S)-21-acetoxyl-apo-melianone + reduced [NADPH--hemoprotein reductase] + O2 = luvungin A + oxidized [NADPH--hemoprotein reductase] + H2O + H(+). The protein operates within secondary metabolite biosynthesis; terpenoid biosynthesis. Functionally, monooxygenase involved in the biosynthesis of limonoids triterpene natural products such as limonin, a compound with insecticidal activity responsible for the bitter taste in citrus. Catalyzes the conversion of (21S)-21-acetoxyl-apo-melianone to luvungin A. This chain is Luvungin A synthase CYP716AC1, found in Citrus sinensis (Sweet orange).